A 126-amino-acid polypeptide reads, in one-letter code: Phosphoribosyl-AMP cyclohydrolase (126 aa).

Residue Asp-74 coordinates Mg(2+). Cys-75 is a binding site for Zn(2+). Mg(2+) contacts are provided by Asp-76 and Asp-78. Cys-92 and Cys-99 together coordinate Zn(2+).

It belongs to the PRA-CH family. In terms of assembly, homodimer. The cofactor is Mg(2+). Zn(2+) is required as a cofactor.

Its subcellular location is the cytoplasm. It carries out the reaction 1-(5-phospho-beta-D-ribosyl)-5'-AMP + H2O = 1-(5-phospho-beta-D-ribosyl)-5-[(5-phospho-beta-D-ribosylamino)methylideneamino]imidazole-4-carboxamide. It participates in amino-acid biosynthesis; L-histidine biosynthesis; L-histidine from 5-phospho-alpha-D-ribose 1-diphosphate: step 3/9. Its function is as follows. Catalyzes the hydrolysis of the adenine ring of phosphoribosyl-AMP. The chain is Phosphoribosyl-AMP cyclohydrolase from Geotalea daltonii (strain DSM 22248 / JCM 15807 / FRC-32) (Geobacter daltonii).